Consider the following 384-residue polypeptide: Urea transporter 1 (384 aa).

The tract at residues 1 to 23 (MDDNPTAVKLDQGGNQAPQGQGR) is disordered. The next 5 helical transmembrane spans lie at 61-81 (ISQV…VGLL), 85-105 (PWCA…ALLL), 111-131 (AITA…MAIY), 138-158 (FWWL…FSSA), and 169-189 (PVFT…TGHF). N-linked (GlcNAc...) asparagine glycosylation occurs at Asn206. 3 helical membrane-spanning segments follow: residues 237-257 (GGIF…HAAI), 279-299 (GLWG…FMAL), and 327-347 (VVGL…FLLL).

This sequence belongs to the urea transporter family. In terms of assembly, homotrimer; each subunit contains a pore through which urea permeates. Identified in a complex with STOM.

It localises to the cell membrane. Its subcellular location is the basolateral cell membrane. The catalysed reaction is urea(in) = urea(out). Its function is as follows. Mediates the transport of urea driven by a concentration gradient across the cell membranes of erythrocytes and the renal inner medullary collecting duct which is critical to the urinary concentrating mechanism. Facilitates water transport in erythrocytes. This Ovis aries (Sheep) protein is Urea transporter 1 (SLC14A1).